An 87-amino-acid chain; its full sequence is Small ribosomal subunit protein bS18 (87 aa).

The protein belongs to the bacterial ribosomal protein bS18 family. As to quaternary structure, part of the 30S ribosomal subunit. Forms a tight heterodimer with protein bS6.

Functionally, binds as a heterodimer with protein bS6 to the central domain of the 16S rRNA, where it helps stabilize the platform of the 30S subunit. This Oleidesulfovibrio alaskensis (strain ATCC BAA-1058 / DSM 17464 / G20) (Desulfovibrio alaskensis) protein is Small ribosomal subunit protein bS18.